A 616-amino-acid polypeptide reads, in one-letter code: Chaperone protein HscA (616 aa).

Belongs to the heat shock protein 70 family.

In terms of biological role, chaperone involved in the maturation of iron-sulfur cluster-containing proteins. Has a low intrinsic ATPase activity which is markedly stimulated by HscB. Involved in the maturation of IscU. The polypeptide is Chaperone protein HscA (Salmonella arizonae (strain ATCC BAA-731 / CDC346-86 / RSK2980)).